The chain runs to 246 residues: Uridylate kinase (246 aa).

11 to 14 is a binding site for ATP; sequence KISG. A UMP-binding site is contributed by G53. 2 residues coordinate ATP: G54 and R58. UMP-binding positions include D74 and 135-142; that span reads TGSPYLTT. T162, Y169, and D172 together coordinate ATP.

It belongs to the UMP kinase family. As to quaternary structure, homohexamer.

The protein resides in the cytoplasm. The catalysed reaction is UMP + ATP = UDP + ADP. Its pathway is pyrimidine metabolism; CTP biosynthesis via de novo pathway; UDP from UMP (UMPK route): step 1/1. With respect to regulation, inhibited by UTP. Functionally, catalyzes the reversible phosphorylation of UMP to UDP. The protein is Uridylate kinase of Chlamydia abortus (strain DSM 27085 / S26/3) (Chlamydophila abortus).